Here is a 54-residue protein sequence, read N- to C-terminus: Protein YojO (54 aa).

It belongs to the YojO family.

The sequence is that of Protein YojO (yojO) from Escherichia coli (strain K12).